Reading from the N-terminus, the 194-residue chain is Glycerol-3-phosphate acyltransferase (194 aa).

6 helical membrane passes run 3-23, 52-72, 80-100, 112-132, 135-155, and 162-182; these read AGLF…GLLL, VGIL…LLAW, MQAW…FLLF, VFLA…ILLV, WRYI…IIFF, and LLIA…SNIS.

Belongs to the PlsY family. In terms of assembly, probably interacts with PlsX.

The protein resides in the cell inner membrane. It catalyses the reaction an acyl phosphate + sn-glycerol 3-phosphate = a 1-acyl-sn-glycero-3-phosphate + phosphate. Its pathway is lipid metabolism; phospholipid metabolism. In terms of biological role, catalyzes the transfer of an acyl group from acyl-phosphate (acyl-PO(4)) to glycerol-3-phosphate (G3P) to form lysophosphatidic acid (LPA). This enzyme utilizes acyl-phosphate as fatty acyl donor, but not acyl-CoA or acyl-ACP. This chain is Glycerol-3-phosphate acyltransferase, found in Trichlorobacter lovleyi (strain ATCC BAA-1151 / DSM 17278 / SZ) (Geobacter lovleyi).